Consider the following 1274-residue polypeptide: Meiosis inhibitor protein 1 (1274 aa).

As to expression, expressed predominantly in testis. Weakly expressed in spleen and thymus. Expressed in the ovaries, Fallopian tubes and uterus.

Functionally, required for normal meiotic chromosome synapsis. May be involved in the formation of meiotic double-strand breaks (DSBs) in spermatocytes. This Homo sapiens (Human) protein is Meiosis inhibitor protein 1.